A 464-amino-acid chain; its full sequence is Cysteine--tRNA ligase (464 aa).

Position 28 (Cys-28) interacts with Zn(2+). A 'HIGH' region motif is present at residues 30–40 (ITAYDFCHIGH). The Zn(2+) site is built by Cys-210, His-235, and Glu-239. Residues 267–271 (KMSKS) carry the 'KMSKS' region motif. Lys-270 contributes to the ATP binding site.

It belongs to the class-I aminoacyl-tRNA synthetase family. As to quaternary structure, monomer. Requires Zn(2+) as cofactor.

The protein resides in the cytoplasm. The enzyme catalyses tRNA(Cys) + L-cysteine + ATP = L-cysteinyl-tRNA(Cys) + AMP + diphosphate. The sequence is that of Cysteine--tRNA ligase from Buchnera aphidicola subsp. Baizongia pistaciae (strain Bp).